Reading from the N-terminus, the 506-residue chain is MNKYVVSTILVMISTFFSRIMGFVKIKIFSYYFGANLDADIFNYVFNIPNNLRKILSEGAMTSAFLPEFTHEKNKSHEKAVSFFRTVITFNIISIGLIVLVMIIFAKPIMYFISYYRGENLIFASSVFGYLVLYILLISLSSIFVSVLNSYKIFFIPSFSPIMLSFGIILSIFLFYGRFGIYSAVIGVIFGGFLQFLIPFANCLMIGFAWKPTFYFREKVFLNFLTRWLRMIFGFSISIITQQISFALASTLEIGSVSILSNAVVYYQLPVGIFYISIATVIFPKMAEHAVLGNNIKLNALLVDGIKILLLIFIPVSFLMFIWSDYILNLFLMGGKFSIYDTQKTASVLKCFLLGLLFYSMFGFFQKYYFSIRDAKTPFYLSVLFSILDIAISVFGINYYGLNALALAQSISFMICVIVFYFIILKRGVKIDLIEILFVLLKSIITLFPLYAIYFFFEKFQWDVGFSFKNLYFLMAAGIVSIFVLFICYSVLGINKLFRYIRRDAL.

Transmembrane regions (helical) follow at residues 4–24, 86–106, 127–147, 153–173, 181–201, 232–252, 263–283, 308–328, 345–365, 377–397, 405–425, 436–456, and 474–494; these read YVVS…MGFV, TVIT…IIFA, VFGY…FVSV, IFFI…LSIF, IYSA…IPFA, IFGF…ASTL, AVVY…TVIF, ILLL…DYIL, TASV…FGFF, TPFY…VFGI, LALA…FIIL, ILFV…IYFF, and LMAA…VLGI.

This sequence belongs to the MurJ/MviN family.

Its subcellular location is the cell inner membrane. Its pathway is cell wall biogenesis; peptidoglycan biosynthesis. In terms of biological role, involved in peptidoglycan biosynthesis. Transports lipid-linked peptidoglycan precursors from the inner to the outer leaflet of the cytoplasmic membrane. This Borreliella burgdorferi (strain ATCC 35210 / DSM 4680 / CIP 102532 / B31) (Borrelia burgdorferi) protein is Probable lipid II flippase MurJ.